The chain runs to 56 residues: Small ribosomal subunit protein uS14 (56 aa).

Positions 21, 24, 39, and 42 each coordinate Zn(2+).

The protein belongs to the universal ribosomal protein uS14 family. Zinc-binding uS14 subfamily. As to quaternary structure, part of the 30S ribosomal subunit. Zn(2+) is required as a cofactor.

In terms of biological role, binds 16S rRNA, required for the assembly of 30S particles. This Pyrococcus furiosus (strain ATCC 43587 / DSM 3638 / JCM 8422 / Vc1) protein is Small ribosomal subunit protein uS14.